A 200-amino-acid chain; its full sequence is 3-isopropylmalate dehydratase small subunit (200 aa).

This sequence belongs to the LeuD family. LeuD type 1 subfamily. Heterodimer of LeuC and LeuD.

The enzyme catalyses (2R,3S)-3-isopropylmalate = (2S)-2-isopropylmalate. It participates in amino-acid biosynthesis; L-leucine biosynthesis; L-leucine from 3-methyl-2-oxobutanoate: step 2/4. In terms of biological role, catalyzes the isomerization between 2-isopropylmalate and 3-isopropylmalate, via the formation of 2-isopropylmaleate. The polypeptide is 3-isopropylmalate dehydratase small subunit (Methylobacterium radiotolerans (strain ATCC 27329 / DSM 1819 / JCM 2831 / NBRC 15690 / NCIMB 10815 / 0-1)).